The primary structure comprises 123 residues: VQ motif-containing protein 29 (123 aa).

A disordered region spans residues 24 to 55; the sequence is TKNYLTSLHSTRKQPSKPLKRPAISSPLNPMH. A compositionally biased stretch (basic residues) spans 33–43; sequence STRKQPSKPLK. The short motif at 66–75 is the VQ element; it reads FKVLVQRLTG. Basic and acidic residues predominate over residues 77 to 94; the sequence is PEHETVQAKPLKTSDDAA. Residues 77-123 are disordered; that stretch reads PEHETVQAKPLKTSDDAAKQSSSSFAFDPSSSWGDFSFQNPANISRW. Residues 97-108 show a composition bias toward low complexity; sequence SSSSFAFDPSSS. Positions 109 to 123 are enriched in polar residues; it reads WGDFSFQNPANISRW.

It localises to the nucleus. Its function is as follows. May function as negative regulator of flowering transition. The protein is VQ motif-containing protein 29 of Arabidopsis thaliana (Mouse-ear cress).